A 338-amino-acid polypeptide reads, in one-letter code: Sporulation-specific protein 4 (338 aa).

A disordered region spans residues 14–37 (QEENKNFLHKNTNEPNEMEQSQTQ). Residues 22 to 37 (HKNTNEPNEMEQSQTQ) show a composition bias toward polar residues.

In terms of biological role, not essential for sporulation. Might be a component of the cell wall. In Saccharomyces cerevisiae (strain ATCC 204508 / S288c) (Baker's yeast), this protein is Sporulation-specific protein 4 (SPS4).